We begin with the raw amino-acid sequence, 447 residues long: Neuronal acetylcholine receptor subunit alpha-10 (447 aa).

An N-terminal signal peptide occupies residues 1 to 24 (MGTRSHYLDLGFLLLLFLPAECLG). At 25–237 (AEGRLAHKLF…FTLLLRRRAA (213 aa)) the chain is on the extracellular side. N-linked (GlcNAc...) asparagine glycans are attached at residues asparagine 40 and asparagine 56. 2 disulfides stabilise this stretch: cysteine 154-cysteine 168 and cysteine 218-cysteine 219. The next 3 helical transmembrane spans lie at 238–258 (AYVC…PLAF), 268–288 (VSLG…LAES), and 302–322 (YMAT…IMNL). The Cytoplasmic segment spans residues 323-425 (HYCGPNAHPV…WKRLARVMDR (103 aa)). A helical membrane pass occupies residues 426 to 446 (FFLGIFFCMALVMSLIVLVQA).

It belongs to the ligand-gated ion channel (TC 1.A.9) family. Acetylcholine receptor (TC 1.A.9.1) subfamily. Alpha-10/CHRNA10 sub-subfamily. Forms homo- or heterooligomeric channels in conjunction with CHRNA10. The native outer hair cell receptor may be composed of CHRNA9:CHRNA10 heterooligomers. Found in the stoichiometric form (CHRNA9)2:(CHRNA10)3. As to expression, expressed in the outer hair cells of the cochlea and the neurons of dorsal root ganglia.

It localises to the synaptic cell membrane. The protein resides in the cell membrane. It carries out the reaction Ca(2+)(in) = Ca(2+)(out). The enzyme catalyses Mg(2+)(in) = Mg(2+)(out). The catalysed reaction is K(+)(in) = K(+)(out). It catalyses the reaction Na(+)(in) = Na(+)(out). With respect to regulation, activated by a myriad of ligands such as acetylcholine. AChR activity is inhibited by the antagonist alpha-conotoxins RgIA and GeXXA, small disulfide-constrained peptides from cone snails. Its function is as follows. Component of neuronal acetylcholine receptors (nAChRs) that function as pentameric, ligand-gated cation channels with high calcium permeability among other activities. nAChRs are excitatory neurotrasnmitter receptors formed by a collection of nAChR subunits known to mediate synaptic transmission in the nervous system and the neuromuscular junction. Each nAchR subunit confers differential attributes to channel properties, including activation, deactivation and desensitization kinetics, pH sensitivity, cation permeability, and binding to allosteric modulators. Forms heteropentamers with CHRNA9. Expressed in the inner ear, in sympathetic neurons and in other non-neuronal cells, such as skin keratinocytes and lymphocytes. nAChR formed by CHRNA9:CHRNA10 mediate central nervous system control of auditory and vestibular sensory processing. The channel is permeable to a range of divalent cations including calcium, the influx of which may activate a potassium current which hyperpolarizes the cell membrane. In the ear, mediates synaptic transmission between efferent olivocochlear fibers and hair cells of the cochlea, this may lead to a reduction in basilar membrane motion, altering the activity of auditory nerve fibers and reducing the range of dynamic hearing. This may protect against acoustic trauma. May also regulate keratinocyte adhesion. The chain is Neuronal acetylcholine receptor subunit alpha-10 (Chrna10) from Rattus norvegicus (Rat).